Here is a 339-residue protein sequence, read N- to C-terminus: Phomopsene synthase (339 aa).

Mg(2+)-binding residues include aspartate 89, aspartate 94, asparagine 224, serine 228, and glutamate 232.

This sequence belongs to the terpene synthase family. Mg(2+) is required as a cofactor.

It catalyses the reaction (2E,6E,10E)-geranylgeranyl diphosphate = phomopsene + diphosphate. It carries out the reaction (2E,6E,10E)-geranylgeranyl diphosphate = allokutznerene + diphosphate. It participates in secondary metabolite biosynthesis; terpenoid biosynthesis. Diterpene synthase that catalyzes the conversion of geranylgeranyl diphosphate (GGPP) to phomopsene, a diterpene previously reported from the fungus P.amygdali. Phomopsene is the main product, but the enzyme can also produce allokutznerene (about 50% of phomopsene production activity) and traces of spiroviolene. Cannot use geranyl diphosphate (GPP), farnesyl diphosphate (FPP) and geranylfarnesyl diphosphate (GFPP). This Allokutzneria albata (Kibdelosporangium albatum) protein is Phomopsene synthase.